The following is a 409-amino-acid chain: Probable type I inositol 1,4,5-trisphosphate 5-phosphatase (409 aa).

This sequence belongs to the inositol 1,4,5-trisphosphate 5-phosphatase type I family.

The catalysed reaction is 1D-myo-inositol 1,4,5-trisphosphate + H2O = 1D-myo-inositol 1,4-bisphosphate + phosphate. It carries out the reaction 1D-myo-inositol 1,3,4,5-tetrakisphosphate + H2O = 1D-myo-inositol 1,3,4-trisphosphate + phosphate. The sequence is that of Probable type I inositol 1,4,5-trisphosphate 5-phosphatase (ipp-5) from Caenorhabditis elegans.